Reading from the N-terminus, the 256-residue chain is MLIIPAIDIKEGKCVRLTRGDFSQKKIYLDNPNDMAIIWRKQNAKMLHIVDLDAALTGEMVNFEKIREIVTNLDIPVQVGGGIRSADAVKRYLDIGVGRVVIGSAAVTNPKLVEELLHTYTSSQIVVGIDAENGIPKIKGWTESSMIQDYDLALQMKEMGIERIIYTDISRDGMMQGFGYESTRRFAERAGMKITASGGVTNAEDLHRLNELQPFGVDSVIIGKALYECNFPCQELWYNFEEEISLDHNFSTARKK.

Asp8 functions as the Proton acceptor in the catalytic mechanism. The Proton donor role is filled by Asp130.

This sequence belongs to the HisA/HisF family.

It localises to the cytoplasm. It catalyses the reaction 1-(5-phospho-beta-D-ribosyl)-5-[(5-phospho-beta-D-ribosylamino)methylideneamino]imidazole-4-carboxamide = 5-[(5-phospho-1-deoxy-D-ribulos-1-ylimino)methylamino]-1-(5-phospho-beta-D-ribosyl)imidazole-4-carboxamide. It functions in the pathway amino-acid biosynthesis; L-histidine biosynthesis; L-histidine from 5-phospho-alpha-D-ribose 1-diphosphate: step 4/9. The protein is 1-(5-phosphoribosyl)-5-[(5-phosphoribosylamino)methylideneamino] imidazole-4-carboxamide isomerase of Pelodictyon phaeoclathratiforme (strain DSM 5477 / BU-1).